Consider the following 229-residue polypeptide: 2-C-methyl-D-erythritol 4-phosphate cytidylyltransferase (229 aa).

Belongs to the IspD/TarI cytidylyltransferase family. IspD subfamily.

The enzyme catalyses 2-C-methyl-D-erythritol 4-phosphate + CTP + H(+) = 4-CDP-2-C-methyl-D-erythritol + diphosphate. The protein operates within isoprenoid biosynthesis; isopentenyl diphosphate biosynthesis via DXP pathway; isopentenyl diphosphate from 1-deoxy-D-xylulose 5-phosphate: step 2/6. Its function is as follows. Catalyzes the formation of 4-diphosphocytidyl-2-C-methyl-D-erythritol from CTP and 2-C-methyl-D-erythritol 4-phosphate (MEP). This is 2-C-methyl-D-erythritol 4-phosphate cytidylyltransferase from Clostridium botulinum (strain 657 / Type Ba4).